The following is a 305-amino-acid chain: MDLSGVKKKSLLGVKENNKKSSTRAPSPTKRKDRSDEKSKDRSKDKGTTKESSEKDRGRDKTRKRRSASSGSSSTRSRSSSTSSSGSSTSTGSSSGSSSSSASSRSGSSSTSRSSSSSSSSGSPSPSRRRHDNRRRSRSKSKPPKRDEKERKRRSPSPKPTKVHIGRLTRNVTKDHIMEIFSTYGKIKMIDMPVERMHPHLSKGYAYVEFENPDEAEKALKHMDGGQIDGQEITATAVLAPWPRPPPRRFSPPRRMLPPPPMWRRSPPRMRRRSRSPRRRSPVRRRSRSPGRRRHRSRSSSNSSR.

The segment covering 1-10 (MDLSGVKKKS) has biased composition (basic residues). The necessary for interaction with SRP54, nuclear localization and exon-skipping stretch occupies residues 1–161 (MDLSGVKKKS…KRRSPSPKPT (161 aa)). The segment at 1-170 (MDLSGVKKKS…TKVHIGRLTR (170 aa)) is disordered. Residues 1-220 (MDLSGVKKKS…ENPDEAEKAL (220 aa)) are necessary for interaction with the cleaved p110 isoform of CDC2L1. Glycyl lysine isopeptide (Lys-Gly) (interchain with G-Cter in SUMO2) cross-links involve residues Lys7 and Lys15. Residues 33–59 (DRSDEKSKDRSKDKGTTKESSEKDRGR) are compositionally biased toward basic and acidic residues. The residue at position 53 (Ser53) is a Phosphoserine. Residues 68–126 (ASSGSSSTRSRSSSTSSSGSSTSTGSSSGSSSSSASSRSGSSSTSRSSSSSSSSGSPSP) are compositionally biased toward low complexity. A necessary for interactions with UPF2 and UPF3B and UPF2-dependent NMD region spans residues 69-121 (SSGSSSTRSRSSSTSSSGSSTSTGSSSGSSSSSASSRSGSSSTSRSSSSSSSS). 2 stretches are compositionally biased toward basic residues: residues 127 to 143 (SRRRHDNRRRSRSKSKP) and 151 to 167 (RKRRSPSPKPTKVHIGR). Ser155 and Ser157 each carry phosphoserine. The necessary for interaction with PNN and exon-skipping stretch occupies residues 156–242 (PSPKPTKVHI…ITATAVLAPW (87 aa)). The segment at 159 to 244 (KPTKVHIGRL…ATAVLAPWPR (86 aa)) is interaction with SAP18 and ACIN1. Thr161 is modified (phosphothreonine). The RRM domain occupies 161–240 (TKVHIGRLTR…QEITATAVLA (80 aa)). Lys218 bears the N6-acetyllysine mark. A necessary for interaction with TRA2B, nuclear localization and exon-skipping region spans residues 238 to 305 (VLAPWPRPPP…RSRSSSNSSR (68 aa)). The disordered stretch occupies residues 240–305 (APWPRPPPRR…RSRSSSNSSR (66 aa)). Pro residues predominate over residues 242–262 (WPRPPPRRFSPPRRMLPPPPM). Over residues 266–298 (SPPRMRRRSRSPRRRSPVRRRSRSPGRRRHRSR) the composition is skewed to basic residues.

The protein belongs to the splicing factor SR family. In terms of assembly, found in mRNA splicing-dependent exon junction complexes (EJC). Found in a post-splicing complex with NXF1, RBM8A, UPF1, UPF2, UPF3A, UPF3B and RNPS1. Component of the heterotrimeric ASAP (apoptosis- and splicing-associated protein) and PSAP complexes consisting of RNPS1, SAP18 and either ACIN1 or PNN, respectively; the ASAP and PSAP complexes probably are formed mutually exclusive. Component of the active spliceosome. Associates with polysomes. Interacts with the cleaved p110 isoform of CDC2L1, CSNK2A1, PNN, SART3, SRP54, SRRM1 and TRA2B/SFRS10. Phosphorylated on one or more of the four Ser/Thr residues (Ser-43, Thr-49, Ser-52 or Ser-53). Ser-53 phosphorylation site is important for splicing and translation stimulation activity in vitro.

The protein localises to the nucleus. Its subcellular location is the nucleus speckle. It localises to the cytoplasm. Part of pre- and post-splicing multiprotein mRNP complexes. Auxiliary component of the splicing-dependent multiprotein exon junction complex (EJC) deposited at splice junction on mRNAs. The EJC is a dynamic structure consisting of core proteins and several peripheral nuclear and cytoplasmic associated factors that join the complex only transiently either during EJC assembly or during subsequent mRNA metabolism. Component of the ASAP and PSAP complexes which bind RNA in a sequence-independent manner and are proposed to be recruited to the EJC prior to or during the splicing process and to regulate specific excision of introns in specific transcription subsets. The ASAP complex can inhibit RNA processing during in vitro splicing reactions. The ASAP complex promotes apoptosis and is disassembled after induction of apoptosis. Enhances the formation of the ATP-dependent A complex of the spliceosome. Involved in both constitutive splicing and, in association with SRP54 and TRA2B/SFRS10, in distinctive modulation of alternative splicing in a substrate-dependent manner. Involved in the splicing modulation of BCL2L1/Bcl-X (and probably other apoptotic genes); specifically inhibits formation of proapoptotic isoforms such as Bcl-X(S); the activity is different from the established EJC assembly and function. Participates in mRNA 3'-end cleavage. Involved in UPF2-dependent nonsense-mediated decay (NMD) of mRNAs containing premature stop codons. Also mediates increase of mRNA abundance and translational efficiency. Binds spliced mRNA 20-25 nt upstream of exon-exon junctions. The chain is RNA-binding protein with serine-rich domain 1 (Rnps1) from Rattus norvegicus (Rat).